The sequence spans 162 residues: Nitrogen regulatory protein (162 aa).

The 145-residue stretch at 12–156 folds into the PTS EIIA type-2 domain; the sequence is NVLNQECTRS…EELYEIITEA (145 aa). The Tele-phosphohistidine intermediate role is filled by His-73.

It localises to the cytoplasm. Functionally, seems to have a role in regulating nitrogen assimilation. In Klebsiella oxytoca, this protein is Nitrogen regulatory protein (ptsN).